The sequence spans 379 residues: UDP-N-acetylglucosamine--N-acetylmuramyl-(pentapeptide) pyrophosphoryl-undecaprenol N-acetylglucosamine transferase (379 aa).

Residues 19-21, Asn-133, Arg-174, Ser-207, Ile-261, and Gln-306 each bind UDP-N-acetyl-alpha-D-glucosamine; that span reads TGG.

The protein belongs to the glycosyltransferase 28 family. MurG subfamily.

Its subcellular location is the cell inner membrane. It carries out the reaction di-trans,octa-cis-undecaprenyl diphospho-N-acetyl-alpha-D-muramoyl-L-alanyl-D-glutamyl-meso-2,6-diaminopimeloyl-D-alanyl-D-alanine + UDP-N-acetyl-alpha-D-glucosamine = di-trans,octa-cis-undecaprenyl diphospho-[N-acetyl-alpha-D-glucosaminyl-(1-&gt;4)]-N-acetyl-alpha-D-muramoyl-L-alanyl-D-glutamyl-meso-2,6-diaminopimeloyl-D-alanyl-D-alanine + UDP + H(+). Its pathway is cell wall biogenesis; peptidoglycan biosynthesis. In terms of biological role, cell wall formation. Catalyzes the transfer of a GlcNAc subunit on undecaprenyl-pyrophosphoryl-MurNAc-pentapeptide (lipid intermediate I) to form undecaprenyl-pyrophosphoryl-MurNAc-(pentapeptide)GlcNAc (lipid intermediate II). The chain is UDP-N-acetylglucosamine--N-acetylmuramyl-(pentapeptide) pyrophosphoryl-undecaprenol N-acetylglucosamine transferase from Porphyromonas gingivalis (strain ATCC BAA-308 / W83).